We begin with the raw amino-acid sequence, 89 residues long: Sugar transporter SemiSWEET (89 aa).

3 helical membrane passes run 4–27 (ILLT…IKTI), 35–55 (ISVV…AYGI), and 60–82 (FAVL…ITLI). The PQ-loop domain maps to 7–59 (TGLFAAFFTTFAFAPQSIKTIRTRNTEGISVVMYIMFLTGVISWIAYGIMRSD).

In terms of assembly, homodimer.

The protein resides in the cell membrane. Functionally, the homodimer mediates transmembrane sugar transport down a concentration gradient. Transport is probably effected by rocking-type movements, where a cargo-binding cavity opens first on one and then on the other side of the membrane. This is Sugar transporter SemiSWEET from Escherichia coli (strain UMEA 3162-1).